The primary structure comprises 245 residues: Type I iodothyronine deiodinase (245 aa).

The Extracellular portion of the chain corresponds to 1–9; that stretch reads LSIRVLLHK. Residues 10–30 form a helical; Signal-anchor for type III membrane protein membrane-spanning segment; that stretch reads LLILLQVTLSVVVGKTMMILF. At 31-245 the chain is on the cytoplasmic side; it reads PDTTKRYILK…EIRAVLEKLK (215 aa). The active site involves selenocysteine 123. A non-standard amino acid (selenocysteine) is located at residue selenocysteine 123.

Belongs to the iodothyronine deiodinase family. Predominantly monomer. Can form homodimers but homodimerization is not essential for enzyme activity.

Its subcellular location is the cell membrane. The protein resides in the endoplasmic reticulum membrane. It is found in the basolateral cell membrane. It catalyses the reaction 3,3',5-triiodo-L-thyronine + iodide + A + H(+) = L-thyroxine + AH2. It carries out the reaction 3,3',5'-triiodo-L-thyronine + iodide + A + H(+) = L-thyroxine + AH2. The catalysed reaction is 3,3'-diiodo-L-thyronine + iodide + A + H(+) = 3,3',5'-triiodo-L-thyronine + AH2. The enzyme catalyses 3,3'-diiodo-L-thyronine + iodide + A + H(+) = 3,3',5-triiodo-L-thyronine + AH2. It catalyses the reaction 3'-iodo-L-thyronine + iodide + A + H(+) = 3',5'-diiodo-L-thyronine + AH2. It carries out the reaction 3-iodo-L-thyronine + iodide + A + H(+) = 3,5-diiodo-L-thyronine + AH2. The catalysed reaction is 3-iodo-L-thyronine + iodide + A + H(+) = 3,3'-diiodo-L-thyronine + AH2. The enzyme catalyses 3,3'-diiodothyronamine + iodide + A + H(+) = 3,3',5'-triiodothyronamine + AH2. It catalyses the reaction 3'-iodothyronamine + iodide + A + H(+) = 3',5'-diiodothyronamine + AH2. It carries out the reaction 3-iodothyronamine + iodide + A + H(+) = 3,3'-diiodothyronamine + AH2. The catalysed reaction is 3,3'-diiodothyronamine + iodide + A + H(+) = 3,3',5-triiodothyronamine + AH2. The enzyme catalyses 3-iodothyronamine + iodide + A + H(+) = 3,5-diiodothyronamine + AH2. It catalyses the reaction 3,3'-diiodo-L-thyronine sulfate + iodide + A + H(+) = 3,3',5'-triiodo-L-thyronine sulfate + AH2. It carries out the reaction 3,3',5'-triiodo-L-thyronine sulfate + iodide + A + H(+) = L-thyroxine sulfate + AH2. The catalysed reaction is 3,3'-diiodo-L-thyronine sulfate + iodide + A + H(+) = 3,3',5-triiodo-L-thyronine sulfate + AH2. Functionally, plays a crucial role in the metabolism of thyroid hormones (TH) and has specific roles in TH activation and inactivation by deiodination. Catalyzes the deiodiantion of L-thyroxine (T4) to 3,5,3'-triiodothyronine (T3) and 3,3',5'-triiodothyronine (rT3) to 3,3'-diiodothyronine (3,3'-T2) via outer-ring deiodination (ORD). Catalyzes the deiodiantion of T4 to rT3, T3 to 3,3'-T2, 3,5-diiodothyronine (3,5-T2) to 3-monoiodothyronine (3-T1) and 3,3'-T2 to 3-T1 via inner-ring deiodination (IRD). Catalyzes the deiodiantion of 3',5'-diiodothyronine (3',5'-T2) to 3'-monoiodothyronine (3'-T1) via ORD. Catalyzes the phenolic ring deiodinations of 3,3',5'-triiodothyronamine, 3',5'-diiodothyronamine and 3,3'-diiodothyronamine as well as tyrosyl ring deiodinations of 3,5,3'-triiodothyronamine and 3,5-diiodothyronamine. Catalyzes the deiodination of L-thyroxine sulfate and 3,3',5-triiodo-L-thyronine sulfate via IRD and of 3,3',5'-triiodo-L-thyronine sulfate via ORD. The sequence is that of Type I iodothyronine deiodinase (DIO1) from Gallus gallus (Chicken).